The sequence spans 396 residues: Tryptophan synthase beta chain (396 aa).

Position 86 is an N6-(pyridoxal phosphate)lysine (Lys86).

This sequence belongs to the TrpB family. In terms of assembly, tetramer of two alpha and two beta chains. Pyridoxal 5'-phosphate is required as a cofactor.

The catalysed reaction is (1S,2R)-1-C-(indol-3-yl)glycerol 3-phosphate + L-serine = D-glyceraldehyde 3-phosphate + L-tryptophan + H2O. It participates in amino-acid biosynthesis; L-tryptophan biosynthesis; L-tryptophan from chorismate: step 5/5. Functionally, the beta subunit is responsible for the synthesis of L-tryptophan from indole and L-serine. The chain is Tryptophan synthase beta chain from Yersinia pseudotuberculosis serotype O:1b (strain IP 31758).